The sequence spans 413 residues: Tryptophan synthase beta chain (413 aa).

Residue Lys-106 is modified to N6-(pyridoxal phosphate)lysine.

It belongs to the TrpB family. In terms of assembly, tetramer of two alpha and two beta chains. It depends on pyridoxal 5'-phosphate as a cofactor.

It carries out the reaction (1S,2R)-1-C-(indol-3-yl)glycerol 3-phosphate + L-serine = D-glyceraldehyde 3-phosphate + L-tryptophan + H2O. It participates in amino-acid biosynthesis; L-tryptophan biosynthesis; L-tryptophan from chorismate: step 5/5. The beta subunit is responsible for the synthesis of L-tryptophan from indole and L-serine. The chain is Tryptophan synthase beta chain from Methylorubrum populi (strain ATCC BAA-705 / NCIMB 13946 / BJ001) (Methylobacterium populi).